The primary structure comprises 372 residues: tRNA pseudouridine synthase D (372 aa).

Aspartate 85 acts as the Nucleophile in catalysis. In terms of domain architecture, TRUD spans 160–330 (GFTNYFGYQR…MQGSRRFMWG (171 aa)).

This sequence belongs to the pseudouridine synthase TruD family.

The enzyme catalyses uridine(13) in tRNA = pseudouridine(13) in tRNA. Responsible for synthesis of pseudouridine from uracil-13 in transfer RNAs. In Campylobacter jejuni (strain RM1221), this protein is tRNA pseudouridine synthase D.